Consider the following 361-residue polypeptide: Protein-L-isoaspartate O-methyltransferase domain-containing protein 2 (361 aa).

Gly2 is lipidated: N-myristoyl glycine. Ser64 is a catalytic residue. AdoMet binding motif stretches follow at residues 85 to 94 (LNLGSGTGYL), 160 to 164 (YDRVY), and 181 to 191 (LKVGGILVMPL). The segment at 240-250 (VRSLQDLARIA) is BC-box. Residues 303–336 (SNPSDDNSCEDLEEERREEEEKTPPETKPDPPVN) form a disordered region. Acidic residues predominate over residues 309–320 (NSCEDLEEERRE). Basic and acidic residues predominate over residues 321-331 (EEEKTPPETKP). The tract at residues 345–348 (LPLP) is CUL-box.

It belongs to the methyltransferase superfamily. L-isoaspartyl/D-aspartyl protein methyltransferase family.

The protein resides in the cytoplasm. Functionally, may act as a substrate recognition component of an ECS (Elongin BC-CUL5-SOCS-box protein) E3 ubiquitin ligase complex which mediates the ubiquitination and subsequent proteasomal degradation of target proteins. May bind to the methyltransferase cofactor S-adenosylmethionine (AdoMet) via the N-terminal AdoMet binding motif, but probably does not display methyltransferase activity. The polypeptide is Protein-L-isoaspartate O-methyltransferase domain-containing protein 2 (PCMTD2) (Homo sapiens (Human)).